The chain runs to 498 residues: Tyrosine 3-monooxygenase (498 aa).

Positions 1–10 (MPTPSASSPQ) are enriched in polar residues. The tract at residues 1 to 33 (MPTPSASSPQPKGFRRAVSEQDTKQAEAVTSPR) is disordered. Phosphoserine is present on residues Ser19 and Ser31. Ser40 is modified (phosphoserine; by CaMK2 and PKA). Fe cation is bound by residues His331, His336, and Glu376. The residue at position 472 (Ser472) is a Phosphoserine.

Belongs to the biopterin-dependent aromatic amino acid hydroxylase family. In terms of assembly, homotetramer. Interacts (when phosphorylated at Ser-19) with YWHAG; one YWHAG dimer bounds to one TH tetramer and this interaction may influence the phosphorylation and dephosphorylation of other sites. Interacts with NT5DC2; the interaction results in reduced phosphorylation and decreased catalytic activity of TH. It depends on Fe(2+) as a cofactor. In terms of processing, phosphorylated on Ser-19, Ser-31 and Ser-40 by several protein kinases with different site specificities. Phosphorylation at Ser-31 and Ser-40 leads to an increase of TH activity. Phosphorylation at Ser-40 activates the enzyme and also counteracts the feedback inhibition of TH by catecholamines. Phosphorylation of Ser-19 and Ser-31 triggers the proteasomal degradation of TH through the ubiquitin-proteasome pathway. Phosphorylation at Ser-31 facilitates transport of TH from the soma to the nerve terminals via the microtubule network. Phosphorylation at Ser-19 induces the high-affinity binding to the 14-3-3 protein YWHAG; this interaction may influence the phosphorylation and dephosphorylation of other sites. Ser-19 increases the phosphorylation at Ser-40 in a hierarchical manner, leading to increased activity. Expressed in the adrenal gland. Expressed in the retina. Expressed in the in the striatum (at protein level).

It is found in the cytoplasm. Its subcellular location is the perinuclear region. The protein resides in the nucleus. The protein localises to the cell projection. It localises to the axon. It is found in the cytoplasmic vesicle. Its subcellular location is the secretory vesicle. The protein resides in the synaptic vesicle. It catalyses the reaction (6R)-L-erythro-5,6,7,8-tetrahydrobiopterin + L-tyrosine + O2 = (4aS,6R)-4a-hydroxy-L-erythro-5,6,7,8-tetrahydrobiopterin + L-dopa. It functions in the pathway catecholamine biosynthesis; dopamine biosynthesis; dopamine from L-tyrosine: step 1/2. With respect to regulation, inhibited in feedback fashion by the catecholamine neurotransmitters, especially by dopamine in competition with tetrahydrobiopterin. Phosphorylation of several Ser/Thr residues in the N-terminus regulates the catalytic activity. Ser-31 and Ser-40 are readily phosphorylated to activate the catalytic activity. A Cysteine modification induced by N-ethylmaleimide (NEM), inhibits tyrosine 3-monooxygenase activity through the modification of the Cys-177. Catalyzes the conversion of L-tyrosine to L-dihydroxyphenylalanine (L-Dopa), the rate-limiting step in the biosynthesis of catecholamines, dopamine, noradrenaline, and adrenaline. Uses tetrahydrobiopterin and molecular oxygen to convert tyrosine to L-Dopa. In addition to tyrosine, is able to catalyze the hydroxylation of phenylalanine and tryptophan with lower specificity. Positively regulates the regression of retinal hyaloid vessels during postnatal development. This Mus musculus (Mouse) protein is Tyrosine 3-monooxygenase (Th).